A 350-amino-acid chain; its full sequence is NADH-quinone oxidoreductase subunit H (350 aa).

The next 8 membrane-spanning stretches (helical) occupy residues Phe5–Met25, Phe76–Ile96, Ile118–Gly138, Ile162–Val182, Met190–Ala210, Leu243–Gly263, Leu284–Val304, and Leu319–Ile339.

It belongs to the complex I subunit 1 family. In terms of assembly, NDH-1 is composed of 14 different subunits. Subunits NuoA, H, J, K, L, M, N constitute the membrane sector of the complex.

The protein resides in the cell inner membrane. It carries out the reaction a quinone + NADH + 5 H(+)(in) = a quinol + NAD(+) + 4 H(+)(out). Functionally, NDH-1 shuttles electrons from NADH, via FMN and iron-sulfur (Fe-S) centers, to quinones in the respiratory chain. The immediate electron acceptor for the enzyme in this species is believed to be ubiquinone. Couples the redox reaction to proton translocation (for every two electrons transferred, four hydrogen ions are translocated across the cytoplasmic membrane), and thus conserves the redox energy in a proton gradient. This subunit may bind ubiquinone. The chain is NADH-quinone oxidoreductase subunit H from Flavobacterium johnsoniae (strain ATCC 17061 / DSM 2064 / JCM 8514 / BCRC 14874 / CCUG 350202 / NBRC 14942 / NCIMB 11054 / UW101) (Cytophaga johnsonae).